The following is a 444-amino-acid chain: ATP-dependent protease ATPase subunit HslU (444 aa).

ATP contacts are provided by residues Ile18, Gly60–Glu65, Asp256, Glu321, and Arg393.

Belongs to the ClpX chaperone family. HslU subfamily. In terms of assembly, a double ring-shaped homohexamer of HslV is capped on each side by a ring-shaped HslU homohexamer. The assembly of the HslU/HslV complex is dependent on binding of ATP.

Its subcellular location is the cytoplasm. Functionally, ATPase subunit of a proteasome-like degradation complex; this subunit has chaperone activity. The binding of ATP and its subsequent hydrolysis by HslU are essential for unfolding of protein substrates subsequently hydrolyzed by HslV. HslU recognizes the N-terminal part of its protein substrates and unfolds these before they are guided to HslV for hydrolysis. The chain is ATP-dependent protease ATPase subunit HslU from Buchnera aphidicola subsp. Baizongia pistaciae (strain Bp).